The following is a 572-amino-acid chain: Phosphoenolpyruvate-protein phosphotransferase (572 aa).

H190 acts as the Tele-phosphohistidine intermediate in catalysis. Residues R297 and R333 each contribute to the phosphoenolpyruvate site. Residues E432 and D456 each coordinate Mg(2+). Phosphoenolpyruvate-binding positions include 455 to 456 and R466; that span reads ND. C503 (proton donor) is an active-site residue.

It belongs to the PEP-utilizing enzyme family. Homodimer. It depends on Mg(2+) as a cofactor.

It localises to the cytoplasm. It carries out the reaction L-histidyl-[protein] + phosphoenolpyruvate = N(pros)-phospho-L-histidyl-[protein] + pyruvate. In terms of biological role, general (non sugar-specific) component of the phosphoenolpyruvate-dependent sugar phosphotransferase system (sugar PTS). This major carbohydrate active-transport system catalyzes the phosphorylation of incoming sugar substrates concomitantly with their translocation across the cell membrane. Enzyme I transfers the phosphoryl group from phosphoenolpyruvate (PEP) to the phosphoryl carrier protein (HPr). The sequence is that of Phosphoenolpyruvate-protein phosphotransferase (ptsI) from Listeria innocua serovar 6a (strain ATCC BAA-680 / CLIP 11262).